A 782-amino-acid polypeptide reads, in one-letter code: Vacuolar import and degradation protein 27 (782 aa).

A phosphoserine mark is found at Ser170, Ser195, and Ser196. A compositionally biased stretch (acidic residues) spans 188–200 (DDDDELDSSSDDF). Residues 188–215 (DDDDELDSSSDDFQDAKDTSFEHEKESE) form a disordered region. Over residues 201–215 (QDAKDTSFEHEKESE) the composition is skewed to basic and acidic residues. At Ser222 the chain carries Phosphoserine. Residues 372–384 (DDRSNEERDKESS) are compositionally biased toward basic and acidic residues. The tract at residues 372–422 (DDRSNEERDKESSESENDSEDEDDENDHSKRIISSEAFEEPRRATSKGNSS) is disordered. Positions 385–397 (ESENDSEDEDDEN) are enriched in acidic residues. Thr486 is subject to Phosphothreonine.

Belongs to the VID27 family.

It localises to the cytoplasm. Its function is as follows. Has a role in the negative regulation of gluconeogenesis. Required for vacuolar catabolite degradation of fructose-1,6-bisphosphatase (FBPase). This is Vacuolar import and degradation protein 27 (VID27) from Saccharomyces cerevisiae (strain ATCC 204508 / S288c) (Baker's yeast).